We begin with the raw amino-acid sequence, 120 residues long: Jacalin-related lectin 39 (120 aa).

A Jacalin-type lectin domain is found at 6 to 120 (SRDHADFVAH…KRTFDFGGFN (115 aa)).

Belongs to the jacalin lectin family.

The polypeptide is Jacalin-related lectin 39 (JAL39) (Arabidopsis thaliana (Mouse-ear cress)).